The following is a 557-amino-acid chain: Hydroxylamine reductase (557 aa).

Residues C3, C6, C19, and C26 each coordinate [4Fe-4S] cluster. Hybrid [4Fe-2O-2S] cluster is bound by residues H253, E277, C321, C408, C436, C461, E495, and K497. Cysteine persulfide is present on C408.

This sequence belongs to the HCP family. It depends on [4Fe-4S] cluster as a cofactor. Hybrid [4Fe-2O-2S] cluster serves as cofactor.

It is found in the cytoplasm. The enzyme catalyses A + NH4(+) + H2O = hydroxylamine + AH2 + H(+). Its function is as follows. Catalyzes the reduction of hydroxylamine to form NH(3) and H(2)O. The sequence is that of Hydroxylamine reductase from Acidiphilium cryptum (strain JF-5).